The primary structure comprises 358 residues: B3 domain-containing transcription factor NGA3 (358 aa).

The segment covering 1 to 14 has biased composition (polar residues); sequence MDLSLAPTTTTSSD. The tract at residues 1–45 is disordered; that stretch reads MDLSLAPTTTTSSDQEQDRDQELTSNIGASSSSGPSGNNNNLPMM. Over residues 25–45 the composition is skewed to low complexity; it reads SNIGASSSSGPSGNNNNLPMM. A DNA-binding region (TF-B3) is located at residues 56-162; it reads FDKVVTPSDV…KLYIDWRHRP (107 aa). The interval 310–358 is disordered; the sequence is EIGASSSSSSALRLNLSTDHDDDNDDGDDGDDDQFAKKGKSSLSLNFNP. Residues 329–342 show a composition bias toward acidic residues; sequence HDDDNDDGDDGDDD.

It is found in the nucleus. In terms of biological role, regulates lateral organ growth. Functionally redundant with NGA1, NGA2 and NGA4. The sequence is that of B3 domain-containing transcription factor NGA3 (NGA3) from Arabidopsis thaliana (Mouse-ear cress).